Consider the following 279-residue polypeptide: Probable endonuclease 4 (279 aa).

Residues histidine 67, histidine 107, glutamate 144, aspartate 177, histidine 180, histidine 214, aspartate 227, histidine 229, and glutamate 259 each contribute to the Zn(2+) site.

It belongs to the AP endonuclease 2 family. It depends on Zn(2+) as a cofactor.

It carries out the reaction Endonucleolytic cleavage to 5'-phosphooligonucleotide end-products.. In terms of biological role, endonuclease IV plays a role in DNA repair. It cleaves phosphodiester bonds at apurinic or apyrimidinic (AP) sites, generating a 3'-hydroxyl group and a 5'-terminal sugar phosphate. The chain is Probable endonuclease 4 from Sulfurihydrogenibium sp. (strain YO3AOP1).